Reading from the N-terminus, the 386-residue chain is IgA receptor (386 aa).

Positions 1-41 (MARKDTNKQYSLRKLKTGTASVAVAVAVLGAGFANQTEVKA) are cleaved as a signal peptide. Residues 42–152 (AEIKKPQADS…QKKHQQEQQQ (111 aa)) are igA-binding. Basic and acidic residues-rich tracts occupy residues 79–88 (YADDKEKDPQ), 97–128 (QDLR…EQLE), 134–166 (EADK…DKQI), 174–201 (LSRD…EKQI), 209–221 (LSRD…EAKK), 233–243 (EHQKLKEDKQI), and 251–267 (LSRD…KVEA). Disordered regions lie at residues 79 to 221 (YADD…EAKK) and 233 to 268 (EHQK…VEAD). C repeat units lie at residues 158–192 (QKLA…EAEH), 193–227 (QKLK…EADL), and 235–269 (QKLK…EADL). 4 D repeats span residues 302-307 (ARLEAE), 308-313 (AKALKE), 316-321 (AKQAEE), and 323-328 (AKLKGN). Residues 323–360 (AKLKGNQTPNAKVAPQANRSRSAMTQQKRTLPSTGETA) form a disordered region. Over residues 339–359 (ANRSRSAMTQQKRTLPSTGET) the composition is skewed to polar residues. Positions 353–357 (LPSTG) match the LPXTG sorting signal motif. At threonine 356 the chain carries Pentaglycyl murein peptidoglycan amidated threonine. Residues 357-386 (GETANPFFTAAAATVMVSAGMLALKRKEEN) constitute a propeptide, removed by sortase.

The protein belongs to the M protein family.

It is found in the secreted. It localises to the cell wall. Binds IgA of both subclasses, and also binds polyclonal IgG weakly. The protein is IgA receptor (arp4) of Streptococcus pyogenes.